The following is a 282-amino-acid chain: Large ribosomal subunit protein uL2c (282 aa).

The disordered stretch occupies residues 230–261 (SAQNAVDHPHGGGEGKAPIGRIPSTPWGKPAL).

Belongs to the universal ribosomal protein uL2 family. In terms of assembly, part of the 50S ribosomal subunit.

The protein localises to the plastid. The polypeptide is Large ribosomal subunit protein uL2c (rpl2) (Helicosporidium sp. subsp. Simulium jonesii (Green alga)).